A 150-amino-acid chain; its full sequence is FAD synthase (150 aa).

ATP is bound by residues 11–12 (TF), 16–19 (HPGH), D96, and Y124.

This sequence belongs to the archaeal FAD synthase family. As to quaternary structure, homodimer. It depends on a divalent metal cation as a cofactor.

The enzyme catalyses FMN + ATP + H(+) = FAD + diphosphate. It functions in the pathway cofactor biosynthesis; FAD biosynthesis; FAD from FMN: step 1/1. Functionally, catalyzes the transfer of the AMP portion of ATP to flavin mononucleotide (FMN) to produce flavin adenine dinucleotide (FAD) coenzyme. The polypeptide is FAD synthase (Methanococcus maripaludis (strain C5 / ATCC BAA-1333)).